The following is a 316-amino-acid chain: B3 domain-containing protein Os04g0581400 (316 aa).

Residues 1–100 form a disordered region; sequence MEFATTSSRF…GSGGGGGGED (100 aa). The segment covering 13-36 has biased composition (acidic residues); that stretch reads EEEEEEEGEQEMEQEQDEEEEEAE. Positions 46–77 are enriched in low complexity; the sequence is TSAAAAATASSSSPTSVSPSATASAAASTSAS. Residues 88 to 98 are compositionally biased toward gly residues; the sequence is GASGSGGGGGG. The segment at residues 110–215 is a DNA-binding region (TF-B3); sequence FDKVVTPSDV…RLFIDWKRRA (106 aa). The disordered stretch occupies residues 239–290; that stretch reads GGAGASSCRPRRPPRSTSITAFARASTSATSTPLCRRGSSSSSAPQGRGFIS. Over residues 253-270 the composition is skewed to low complexity; it reads RSTSITAFARASTSATST.

The protein resides in the nucleus. The sequence is that of B3 domain-containing protein Os04g0581400 from Oryza sativa subsp. japonica (Rice).